Here is a 271-residue protein sequence, read N- to C-terminus: MPELPEVEVTRRGIDAHLAGRYITQVKIRNYALRWPVSPELITLLPGQRINTITRRAKYLLFACSKGTLIIHLGMSGSLRVLPVSTPSLLHDHFELWLDNEKMLRFRDPRRFGVILWWDGDVRQHPLLQKLGPEPLSDAFNGLFLHEKIQRRSISIKEALMNQHIVVGIGNIYANEALFHAGISPLIAAGSLSTALCARLVDAVKMTLQRAIEAGGSSLRDFTDCDGSPGCFQQQYWVYGRTGQPCRKCGALVSKTRQGQRSSFFCAQCQK.

The active-site Schiff-base intermediate with DNA is Pro-2. Glu-3 (proton donor) is an active-site residue. The active-site Proton donor; for beta-elimination activity is Lys-58. Residues His-91, Arg-110, and Arg-152 each coordinate DNA. An FPG-type zinc finger spans residues 237–271; the sequence is WVYGRTGQPCRKCGALVSKTRQGQRSSFFCAQCQK. Arg-261 serves as the catalytic Proton donor; for delta-elimination activity.

The protein belongs to the FPG family. In terms of assembly, monomer. Requires Zn(2+) as cofactor.

The enzyme catalyses Hydrolysis of DNA containing ring-opened 7-methylguanine residues, releasing 2,6-diamino-4-hydroxy-5-(N-methyl)formamidopyrimidine.. It carries out the reaction 2'-deoxyribonucleotide-(2'-deoxyribose 5'-phosphate)-2'-deoxyribonucleotide-DNA = a 3'-end 2'-deoxyribonucleotide-(2,3-dehydro-2,3-deoxyribose 5'-phosphate)-DNA + a 5'-end 5'-phospho-2'-deoxyribonucleoside-DNA + H(+). In terms of biological role, involved in base excision repair of DNA damaged by oxidation or by mutagenic agents. Acts as a DNA glycosylase that recognizes and removes damaged bases. Has a preference for oxidized purines, such as 7,8-dihydro-8-oxoguanine (8-oxoG). Has AP (apurinic/apyrimidinic) lyase activity and introduces nicks in the DNA strand. Cleaves the DNA backbone by beta-delta elimination to generate a single-strand break at the site of the removed base with both 3'- and 5'-phosphates. The polypeptide is Formamidopyrimidine-DNA glycosylase (Nitrosomonas eutropha (strain DSM 101675 / C91 / Nm57)).